The primary structure comprises 480 residues: MTVTKMSWRPQYRSSKFRNVYGKAANREHCFDGIPITKNVHDNHFCAVNARFLAIVTESAGGGSFLVIPLEQTGRIEPNYPKVCGHQGNVLDIKWNPFIDNIIASCSEDTSVRIWEIPDGGLKRNMTEALLELHGHSRRVGLVEWHPTTNNILFSAGYDYKVLIWNLDIGEPVKMIDCHTDVILCMSFNTDGSLLTTTCKDKKLRVIEPRSGRVLQEANCKNHRVNRVVFLGNMKRLLTTGVSRWNTRQIALWDQEDLSMPMIEEEIDGLSGLLFPFYDADTHMLYLAGKGDGNIRYYEISTEKPYLSYLMEFRSPAPQKGLGVMPKHGLDVSACEVFRFYKLVTLKGLIEPISMIVPRRSDSYQEDIYPMTPGTEPALTPDEWLGGINRDPVLMSLKEGYKKSSKVVFKAPIREKKSVVVNGIDLLENVPPRTENELLRMFFRQQDEIRRLKEELAQKDIRLRQLQLELKNLRNNPKNC.

5 WD repeats span residues 85–125, 135–177, 179–217, 220–263, and 265–308; these read GHQG…LKRN, GHSR…KMID, HTDVILCMSFNTDGSLLTTTCKDKKLRVIEPRSGRVLQE, CKNH…MPMI, and EEID…PYLS. Residues 436–479 are a coiled coil; sequence NELLRMFFRQQDEIRRLKEELAQKDIRLRQLQLELKNLRNNPKN.

The protein belongs to the WD repeat coronin family. In terms of assembly, binds to F-actin and to vinculin.

Its subcellular location is the cytoplasm. It localises to the cytoskeleton. Functionally, may play a role in the reorganization of neuronal actin structure. In Mus musculus (Mouse), this protein is Coronin-2B (Coro2b).